The chain runs to 211 residues: MSSLTYLKKYELPPLPYNLDALEPYISKEIIDVHYNGHHRGYVNGANSFVDRVNKILKGEISSGQYDIQGLLRGLVFNINGHKLHSLYWQNMAPAGKGGGKPGGVIGDLIEKQYGSFEKFKALFTEAANSLPGTGWTVLYYEVENGNLQIMTFENHFQNHIAELPILLILDEFEHAYYLQYKNKRADYVNNWWNLVNWDFADKKLQQYMKK.

Residues histidine 34, histidine 85, aspartate 171, and histidine 175 each coordinate Fe cation.

The protein belongs to the iron/manganese superoxide dismutase family. The cofactor is Fe cation.

The catalysed reaction is 2 superoxide + 2 H(+) = H2O2 + O2. Its function is as follows. Destroys superoxide anion radicals which are normally produced within the cells and which are toxic to biological systems. The chain is Superoxide dismutase [Fe] (sod) from Acidianus ambivalens (Desulfurolobus ambivalens).